We begin with the raw amino-acid sequence, 174 residues long: Crossover junction endodeoxyribonuclease RuvC (174 aa).

Residues Asp8, Glu67, and Asp139 contribute to the active site. Mg(2+)-binding residues include Asp8, Glu67, and Asp139.

The protein belongs to the RuvC family. As to quaternary structure, homodimer which binds Holliday junction (HJ) DNA. The HJ becomes 2-fold symmetrical on binding to RuvC with unstacked arms; it has a different conformation from HJ DNA in complex with RuvA. In the full resolvosome a probable DNA-RuvA(4)-RuvB(12)-RuvC(2) complex forms which resolves the HJ. Requires Mg(2+) as cofactor.

It is found in the cytoplasm. The catalysed reaction is Endonucleolytic cleavage at a junction such as a reciprocal single-stranded crossover between two homologous DNA duplexes (Holliday junction).. Functionally, the RuvA-RuvB-RuvC complex processes Holliday junction (HJ) DNA during genetic recombination and DNA repair. Endonuclease that resolves HJ intermediates. Cleaves cruciform DNA by making single-stranded nicks across the HJ at symmetrical positions within the homologous arms, yielding a 5'-phosphate and a 3'-hydroxyl group; requires a central core of homology in the junction. The consensus cleavage sequence is 5'-(A/T)TT(C/G)-3'. Cleavage occurs on the 3'-side of the TT dinucleotide at the point of strand exchange. HJ branch migration catalyzed by RuvA-RuvB allows RuvC to scan DNA until it finds its consensus sequence, where it cleaves and resolves the cruciform DNA. The protein is Crossover junction endodeoxyribonuclease RuvC of Pseudomonas putida (strain GB-1).